The following is a 469-amino-acid chain: Putative dipeptidase SAB1611c (469 aa).

His-84 is a binding site for Zn(2+). Asp-86 is a catalytic residue. Residue Asp-115 coordinates Zn(2+). Glu-149 serves as the catalytic Proton acceptor. Glu-150, Asp-173, and His-440 together coordinate Zn(2+).

This sequence belongs to the peptidase M20A family. Zn(2+) is required as a cofactor.

This Staphylococcus aureus (strain bovine RF122 / ET3-1) protein is Putative dipeptidase SAB1611c.